The following is a 986-amino-acid chain: Translation initiation factor IF-2 (986 aa).

Positions 75–94 are enriched in basic and acidic residues; the sequence is KRLSRLEEQSRKTYEKEQHL. Disordered regions lie at residues 75–105, 127–148, 185–258, and 277–394; these read KRLS…APPL, PPSK…PDAP, SEVP…VSFD, and GRHK…HEED. 2 stretches are compositionally biased toward low complexity: residues 185–210 and 218–235; these read SEVP…ESPL and SEPQ…LPEI. Residues 292 to 313 are compositionally biased toward basic and acidic residues; it reads DALKDEFEPKPAEESRVEEKVV. A compositionally biased stretch (low complexity) spans 315–338; that stretch reads AKKPPVKAAADVKPKPVVADSSSS. Positions 339 to 348 are enriched in basic residues; that stretch reads AKKKGKKKKK. The region spanning 483–653 is the tr-type G domain; the sequence is TRPPVVTIMG…LTEAEMRELR (171 aa). Positions 492–499 are G1; the sequence is GHVDHGKT. Position 492–499 (492–499) interacts with GTP; the sequence is GHVDHGKT. Residues 517 to 521 form a G2 region; the sequence is GITQH. Positions 539–542 are G3; it reads DTPG. Residues 539 to 543 and 593 to 596 contribute to the GTP site; these read DTPGH and NKID. Residues 593–596 form a G4 region; that stretch reads NKID. The G5 stretch occupies residues 629–631; that stretch reads SAK.

This sequence belongs to the TRAFAC class translation factor GTPase superfamily. Classic translation factor GTPase family. IF-2 subfamily.

The protein localises to the cytoplasm. One of the essential components for the initiation of protein synthesis. Protects formylmethionyl-tRNA from spontaneous hydrolysis and promotes its binding to the 30S ribosomal subunits. Also involved in the hydrolysis of GTP during the formation of the 70S ribosomal complex. This is Translation initiation factor IF-2 from Pelodictyon phaeoclathratiforme (strain DSM 5477 / BU-1).